Consider the following 139-residue polypeptide: Nucleoside diphosphate kinase (139 aa).

Residues Lys-10, Phe-58, Arg-86, Thr-92, Arg-103, and Asn-113 each coordinate ATP. His-116 (pros-phosphohistidine intermediate) is an active-site residue.

The protein belongs to the NDK family. In terms of assembly, homotetramer. Mg(2+) serves as cofactor.

It localises to the cytoplasm. It catalyses the reaction a 2'-deoxyribonucleoside 5'-diphosphate + ATP = a 2'-deoxyribonucleoside 5'-triphosphate + ADP. It carries out the reaction a ribonucleoside 5'-diphosphate + ATP = a ribonucleoside 5'-triphosphate + ADP. In terms of biological role, major role in the synthesis of nucleoside triphosphates other than ATP. The ATP gamma phosphate is transferred to the NDP beta phosphate via a ping-pong mechanism, using a phosphorylated active-site intermediate. This is Nucleoside diphosphate kinase from Oleidesulfovibrio alaskensis (strain ATCC BAA-1058 / DSM 17464 / G20) (Desulfovibrio alaskensis).